Here is a 380-residue protein sequence, read N- to C-terminus: Lipoyl synthase, mitochondrial (380 aa).

7 residues coordinate [4Fe-4S] cluster: cysteine 104, cysteine 109, cysteine 115, cysteine 135, cysteine 139, cysteine 142, and serine 350. The 220-residue stretch at 120–339 (EHGTQTATIM…ETRGNELGFL (220 aa)) folds into the Radical SAM core domain.

It belongs to the radical SAM superfamily. Lipoyl synthase family. The cofactor is [4Fe-4S] cluster.

Its subcellular location is the mitochondrion. The enzyme catalyses [[Fe-S] cluster scaffold protein carrying a second [4Fe-4S](2+) cluster] + N(6)-octanoyl-L-lysyl-[protein] + 2 oxidized [2Fe-2S]-[ferredoxin] + 2 S-adenosyl-L-methionine + 4 H(+) = [[Fe-S] cluster scaffold protein] + N(6)-[(R)-dihydrolipoyl]-L-lysyl-[protein] + 4 Fe(3+) + 2 hydrogen sulfide + 2 5'-deoxyadenosine + 2 L-methionine + 2 reduced [2Fe-2S]-[ferredoxin]. It functions in the pathway protein modification; protein lipoylation via endogenous pathway; protein N(6)-(lipoyl)lysine from octanoyl-[acyl-carrier-protein]: step 2/2. Functionally, catalyzes the radical-mediated insertion of two sulfur atoms into the C-6 and C-8 positions of the octanoyl moiety bound to the lipoyl domains of lipoate-dependent enzymes, thereby converting the octanoylated domains into lipoylated derivatives. The sequence is that of Lipoyl synthase, mitochondrial from Culex quinquefasciatus (Southern house mosquito).